Consider the following 597-residue polypeptide: 2-isopropylmalate synthase (597 aa).

Residues 1 to 80 (MQLDIDRLVA…QKNESLERTE (80 aa)) form a unknown region. In terms of domain architecture, Pyruvate carboxyltransferase spans 87-349 (VIIFDTTLRD…ETGIDTTQIV (263 aa)). Residues 87 to 349 (VIIFDTTLRD…ETGIDTTQIV (263 aa)) are 2-isopropylmalate synthase. Residues Asp96, His284, His286, and Asn320 each coordinate Mn(2+). The regulatory domain stretch occupies residues 475 to 597 (KFISQKISTE…KPKAQGSGTI (123 aa)).

It belongs to the alpha-IPM synthase/homocitrate synthase family. LeuA type 1 subfamily. As to quaternary structure, homodimer. It depends on Mn(2+) as a cofactor.

The protein resides in the cytoplasm. It carries out the reaction 3-methyl-2-oxobutanoate + acetyl-CoA + H2O = (2S)-2-isopropylmalate + CoA + H(+). It functions in the pathway amino-acid biosynthesis; L-leucine biosynthesis; L-leucine from 3-methyl-2-oxobutanoate: step 1/4. Functionally, catalyzes the condensation of the acetyl group of acetyl-CoA with 3-methyl-2-oxobutanoate (2-ketoisovalerate) to form 3-carboxy-3-hydroxy-4-methylpentanoate (2-isopropylmalate). The protein is 2-isopropylmalate synthase of Neisseria gonorrhoeae (strain ATCC 700825 / FA 1090).